The chain runs to 732 residues: E3 ubiquitin-protein ligase TRIM56 (732 aa).

The RING-type zinc-finger motif lies at 21–60; it reads CKICLEQLRVPKTLPCLHTYCQDCLAQLAEGSRLRCPECR. The segment at 164 to 205 adopts a B box-type zinc-finger fold; that stretch reads RQAAQCPQHPGEALRFLCQPCSQLLCRECRLDPHLDHPCLPL. The Zn(2+) site is built by Cys169, His172, Cys192, and His197. Residues 211-286 adopt a coiled-coil conformation; it reads ARRPGLEELL…LRAHVEAAEE (76 aa). A compositionally biased stretch (basic and acidic residues) spans 374 to 384; sequence LPQKDSGKDGA. The interval 374–462 is disordered; it reads LPQKDSGKDG…PAPGPNLEGS (89 aa). Polar residues predominate over residues 389–405; sequence GDATQPQSRDGVQTPNQ. Thr402 is subject to Phosphothreonine. Residues 407-416 are compositionally biased toward basic and acidic residues; the sequence is DGAKTPKESR. A Phosphothreonine modification is found at Thr419. Basic residues predominate over residues 434–446; it reads SNKKRKFKGRLKS. Ser452 is modified (phosphoserine).

The protein belongs to the TRIM/RBCC family. In terms of assembly, interacts with STING1. Interacts with TICAM1.

The protein resides in the cytoplasm. It carries out the reaction S-ubiquitinyl-[E2 ubiquitin-conjugating enzyme]-L-cysteine + [acceptor protein]-L-lysine = [E2 ubiquitin-conjugating enzyme]-L-cysteine + N(6)-ubiquitinyl-[acceptor protein]-L-lysine.. It participates in protein modification; protein ubiquitination. In terms of biological role, E3 ubiquitin-protein ligase that plays a key role in innate antiviral immunity by mediating ubiquitination of CGAS and STING1. In response to pathogen- and host-derived double-stranded DNA (dsDNA), targets STING1 to 'Lys-63'-linked ubiquitination, thereby promoting its homodimerization, a step required for the production of type I interferon IFN-beta. Also mediate monoubiquitination of CGAS, thereby promoting CGAS oligomerization and subsequent activation. Independently of its E3 ubiquitin ligase activity, positive regulator of TLR3 signaling. Potentiates extracellular double stranded RNA (dsRNA)-induced expression of IFNB1 and interferon-stimulated genes ISG15, IFIT1/ISG56, CXCL10, OASL and CCL5/RANTES. Restricts bovine viral diarrhea virus (BVDV) replication. The chain is E3 ubiquitin-protein ligase TRIM56 from Bos taurus (Bovine).